Here is a 295-residue protein sequence, read N- to C-terminus: MANITAQLVKELREKTGAGMMDCKKALVQTDGDLEAAIDFLREKGLSSAAKKADRIAAEGTTYILEQGNEAIILEVNAETDFVAKNDKFQVLVSSLAEQLLTAKPASVEAALELTNAEGVKIEDQISTAVATIGEKITLRRFEIKTKTDADSFGAYLHMGGRIGVLVTLEGSTDASAAKDVAMHIAAINPTYVSRDEVSAEEVERERKVLTEQALNEGKPENIVAKMVEGRLGKYFEDVCLLDQSFVKNSDQKVRDFVASTGGSVNGFVRYAVGEGIEKREDNFAEEVMSQVKGN.

The involved in Mg(2+) ion dislocation from EF-Tu stretch occupies residues 80–83 (TDFV).

The protein belongs to the EF-Ts family.

The protein resides in the cytoplasm. Associates with the EF-Tu.GDP complex and induces the exchange of GDP to GTP. It remains bound to the aminoacyl-tRNA.EF-Tu.GTP complex up to the GTP hydrolysis stage on the ribosome. This Lysinibacillus sphaericus (strain C3-41) protein is Elongation factor Ts.